A 558-amino-acid chain; its full sequence is T-complex protein 1 subunit eta (558 aa).

The interval 524-558 is disordered; sequence VRNPKSEQPKAPPGGLRRGGPQGMAGLAKNARLGK.

Belongs to the TCP-1 chaperonin family. As to quaternary structure, heterooligomeric complex of about 850 to 900 kDa that forms two stacked rings, 12 to 16 nm in diameter.

The protein resides in the cytoplasm. Functionally, molecular chaperone; assists the folding of proteins upon ATP hydrolysis. Known to play a role, in vitro, in the folding of actin and tubulin. This Tetrahymena pyriformis protein is T-complex protein 1 subunit eta.